A 329-amino-acid polypeptide reads, in one-letter code: Aspartate carbamoyltransferase catalytic subunit (329 aa).

Carbamoyl phosphate-binding residues include R63 and T64. An L-aspartate-binding site is contributed by K91. Carbamoyl phosphate is bound by residues R113, H141, and Q144. 2 residues coordinate L-aspartate: R179 and R234. Positions 275 and 276 each coordinate carbamoyl phosphate.

It belongs to the aspartate/ornithine carbamoyltransferase superfamily. ATCase family. Heterododecamer (2C3:3R2) of six catalytic PyrB chains organized as two trimers (C3), and six regulatory PyrI chains organized as three dimers (R2).

It carries out the reaction carbamoyl phosphate + L-aspartate = N-carbamoyl-L-aspartate + phosphate + H(+). The protein operates within pyrimidine metabolism; UMP biosynthesis via de novo pathway; (S)-dihydroorotate from bicarbonate: step 2/3. Catalyzes the condensation of carbamoyl phosphate and aspartate to form carbamoyl aspartate and inorganic phosphate, the committed step in the de novo pyrimidine nucleotide biosynthesis pathway. The sequence is that of Aspartate carbamoyltransferase catalytic subunit from Magnetococcus marinus (strain ATCC BAA-1437 / JCM 17883 / MC-1).